A 528-amino-acid chain; its full sequence is Cytochrome b5 reductase 4 (528 aa).

An N-acetylmethionine modification is found at Met1. Residues 1–29 (MLNVPSQAFPAPGSQQRVSSQGRSKVPLK) are disordered. Residues 13–24 (GSQQRVSSQGRS) show a composition bias toward low complexity. The Cytochrome b5 heme-binding domain maps to 54–130 (LIEVTEEELK…LKECLVGRMA (77 aa)). Heme contacts are provided by His89 and His112. Residues 172 to 263 (LSSPSYDWFQ…KESVSWQCLG (92 aa)) form the CS domain. An FAD-binding FR-type domain is found at 280 to 392 (LYYRRCQLIS…SGPEGDFKVS (113 aa)). FAD-binding positions include 372–387 (DRLQIGDFISVSGPEG) and 399–431 (DLFLLAAGTGFTPMVTVLNYALSHMSSLRKVKL).

It belongs to the flavoprotein pyridine nucleotide cytochrome reductase family. FAD is required as a cofactor. Ubiquitously expressed. Isoform 2 is expressed in testis, brain, skeletal muscle and in the male germline.

Its subcellular location is the endoplasmic reticulum. It carries out the reaction 2 Fe(III)-[cytochrome b5] + NADH = 2 Fe(II)-[cytochrome b5] + NAD(+) + H(+). In terms of biological role, NADH-cytochrome b5 reductase involved in endoplasmic reticulum stress response pathway. Plays a critical role in protecting pancreatic beta-cells against oxidant stress, possibly by protecting the cell from excess buildup of reactive oxygen species (ROS). The protein is Cytochrome b5 reductase 4 (Cyb5r4) of Mus musculus (Mouse).